A 64-amino-acid polypeptide reads, in one-letter code: Alpha-mammal toxin BmK-M8 (64 aa).

Residues 2–64 (RDAYIADSEN…ERIKEPGKCG (63 aa)) enclose the LCN-type CS-alpha/beta domain. 4 disulfide bridges follow: Cys12–Cys63, Cys16–Cys36, Cys22–Cys46, and Cys26–Cys48.

The protein belongs to the long (4 C-C) scorpion toxin superfamily. Sodium channel inhibitor family. Alpha subfamily. In terms of tissue distribution, expressed by the venom gland.

The protein resides in the secreted. Its function is as follows. Alpha toxins bind voltage-independently at site-3 of sodium channels (Nav) and inhibit the inactivation of the activated channels, thereby blocking neuronal transmission. This acidic toxin has a weak toxicity and is active against mammals. In Olivierus martensii (Manchurian scorpion), this protein is Alpha-mammal toxin BmK-M8.